A 269-amino-acid chain; its full sequence is GATA zinc finger domain-containing protein 1 (269 aa).

The GATA-type zinc finger occupies 9–33 (CSVCKTTSSSMWKKGAQGEILCHHC). A disordered region spans residues 63–115 (ATFASTSATPPQSNGGGGGKQSKQEIHRRSARLRNTKYKSAPAAEKKVSTKGK). Lysine 262 participates in a covalent cross-link: Glycyl lysine isopeptide (Lys-Gly) (interchain with G-Cter in SUMO2).

Component of a chromatin complex, at least composed of KDM5A, GATAD1 and EMSY. As to expression, ubiquitously expressed among various tissue types. Expressed in left ventricular myocytes.

The protein localises to the nucleus. Its function is as follows. Component of some chromatin complex recruited to chromatin sites methylated 'Lys-4' of histone H3 (H3K4me), with a preference for trimethylated form (H3K4me3). The polypeptide is GATA zinc finger domain-containing protein 1 (GATAD1) (Homo sapiens (Human)).